A 343-amino-acid polypeptide reads, in one-letter code: Isopentenyl-diphosphate delta-isomerase (343 aa).

Arg9–Lys10 is a substrate binding site. FMN contacts are provided by residues Ser67, Ala68–Thr70, Ser98, and Asn127. Residue Ser98–Arg100 coordinates substrate. Residue Gln162 participates in substrate binding. Mg(2+) is bound at residue Glu163. FMN-binding positions include Lys194, Thr224, Gly273–Arg275, and Ala294–Ala295.

The protein belongs to the IPP isomerase type 2 family. Homooctamer. Dimer of tetramers. It depends on FMN as a cofactor. NADPH serves as cofactor. Mg(2+) is required as a cofactor.

It localises to the cytoplasm. It catalyses the reaction isopentenyl diphosphate = dimethylallyl diphosphate. Functionally, involved in the biosynthesis of isoprenoids. Catalyzes the 1,3-allylic rearrangement of the homoallylic substrate isopentenyl (IPP) to its allylic isomer, dimethylallyl diphosphate (DMAPP). This chain is Isopentenyl-diphosphate delta-isomerase, found in Xanthobacter autotrophicus (strain ATCC BAA-1158 / Py2).